We begin with the raw amino-acid sequence, 70 residues long: MSNSTTGLVKWFNEEKGFGFITQDNGGDDVFVHFRSITSDGFKTLAEGQKVSFEVEQGQKGLQAANVVAL.

The CSD domain maps to 7–67; the sequence is GLVKWFNEEK…GQKGLQAANV (61 aa).

It localises to the cytoplasm. This chain is Cold shock-like protein CspG (cspG), found in Shewanella violacea (strain JCM 10179 / CIP 106290 / LMG 19151 / DSS12).